Here is a 260-residue protein sequence, read N- to C-terminus: Global transcriptional regulator CodY (260 aa).

Residues 1 to 159 (MPNLLEKTRK…SSTVVGIQLL (159 aa)) are GAF domain. A DNA-binding region (H-T-H motif) is located at residues 207-226 (ASVIADRIGITRSVIVNALR).

The protein belongs to the CodY family.

It is found in the cytoplasm. Its function is as follows. DNA-binding global transcriptional regulator which is involved in the adaptive response to starvation and acts by directly or indirectly controlling the expression of numerous genes in response to nutrient availability. During rapid exponential growth, CodY is highly active and represses genes whose products allow adaptation to nutrient depletion. This is Global transcriptional regulator CodY from Streptococcus pyogenes serotype M3 (strain SSI-1).